A 495-amino-acid chain; its full sequence is Protein YhjJ (495 aa).

Positions 1–24 (MQGTKIRLLAGSLLMLASAGYVQA) are cleaved as a signal peptide.

It belongs to the peptidase M16 family.

It localises to the periplasm. The protein is Protein YhjJ (yhjJ) of Salmonella typhi.